Consider the following 122-residue polypeptide: Large ribosomal subunit protein uL22 (122 aa).

The disordered stretch occupies residues 102–122 (VAEGKEMKSSKSHKKNQAEGK).

It belongs to the universal ribosomal protein uL22 family. As to quaternary structure, part of the 50S ribosomal subunit.

In terms of biological role, this protein binds specifically to 23S rRNA; its binding is stimulated by other ribosomal proteins, e.g. L4, L17, and L20. It is important during the early stages of 50S assembly. It makes multiple contacts with different domains of the 23S rRNA in the assembled 50S subunit and ribosome. The globular domain of the protein is located near the polypeptide exit tunnel on the outside of the subunit, while an extended beta-hairpin is found that lines the wall of the exit tunnel in the center of the 70S ribosome. The sequence is that of Large ribosomal subunit protein uL22 from Helicobacter pylori (strain ATCC 700392 / 26695) (Campylobacter pylori).